The sequence spans 986 residues: Bifunctional glutamine synthetase adenylyltransferase/adenylyl-removing enzyme (986 aa).

An adenylyl removase region spans residues 1 to 475 (MSFPLAHVDA…VFDHLIGEEK (475 aa)). An adenylyl transferase region spans residues 481–986 (TETLWHDFLE…LFEHNDKYEE (506 aa)).

The protein belongs to the GlnE family. Requires Mg(2+) as cofactor.

It catalyses the reaction [glutamine synthetase]-O(4)-(5'-adenylyl)-L-tyrosine + phosphate = [glutamine synthetase]-L-tyrosine + ADP. The enzyme catalyses [glutamine synthetase]-L-tyrosine + ATP = [glutamine synthetase]-O(4)-(5'-adenylyl)-L-tyrosine + diphosphate. Involved in the regulation of glutamine synthetase GlnA, a key enzyme in the process to assimilate ammonia. When cellular nitrogen levels are high, the C-terminal adenylyl transferase (AT) inactivates GlnA by covalent transfer of an adenylyl group from ATP to specific tyrosine residue of GlnA, thus reducing its activity. Conversely, when nitrogen levels are low, the N-terminal adenylyl removase (AR) activates GlnA by removing the adenylyl group by phosphorolysis, increasing its activity. The regulatory region of GlnE binds the signal transduction protein PII (GlnB) which indicates the nitrogen status of the cell. In Pasteurella multocida (strain Pm70), this protein is Bifunctional glutamine synthetase adenylyltransferase/adenylyl-removing enzyme.